Here is a 217-residue protein sequence, read N- to C-terminus: DNA transformation protein TfoX (217 aa).

This sequence belongs to the Sxy/TfoX family.

Functionally, required for DNA transformation. Positively regulates genes required for DNA transformation (late competence-specific genes) in association with CRP. Required for expression of the late competence-specific gene, com101A. Required for expression of the dprABC operon. The protein is DNA transformation protein TfoX of Haemophilus influenzae (strain ATCC 51907 / DSM 11121 / KW20 / Rd).